The primary structure comprises 289 residues: Diaminopimelate epimerase (289 aa).

Substrate-binding residues include Asn11 and Asn78. Residue Cys87 is the Proton donor of the active site. Substrate is bound by residues 88-89 (GN), Asn163, Asn199, and 217-218 (ER). The Proton acceptor role is filled by Cys226. Residue 227 to 228 (GT) coordinates substrate.

The protein belongs to the diaminopimelate epimerase family. Homodimer.

It is found in the cytoplasm. The catalysed reaction is (2S,6S)-2,6-diaminopimelate = meso-2,6-diaminopimelate. It participates in amino-acid biosynthesis; L-lysine biosynthesis via DAP pathway; DL-2,6-diaminopimelate from LL-2,6-diaminopimelate: step 1/1. Catalyzes the stereoinversion of LL-2,6-diaminopimelate (L,L-DAP) to meso-diaminopimelate (meso-DAP), a precursor of L-lysine and an essential component of the bacterial peptidoglycan. This chain is Diaminopimelate epimerase, found in Rhodococcus opacus (strain B4).